Here is a 442-residue protein sequence, read N- to C-terminus: Alpha-1,6-mannosyl-glycoprotein 2-beta-N-acetylglucosaminyltransferase (442 aa).

Over 1-9 the chain is Cytoplasmic; sequence MRFRIYKRK. Residues 10–29 form a helical; Signal-anchor for type II membrane protein membrane-spanning segment; the sequence is VLILTLVVAACGFVLWSSNG. Residues 30 to 442 are Lumenal-facing; the sequence is RQRKNDALAP…ELCKSYRRLQ (413 aa). 2 N-linked (GlcNAc...) asparagine glycosylation sites follow: Asn-64 and Asn-81. Residues 118 to 122 and Asp-149 each bind substrate; that span reads QVHNR. Cys-191 and Cys-205 form a disulfide bridge. 224–228 contacts substrate; that stretch reads QTKHH. Asp-256 provides a ligand contact to Mn(2+). A disulfide bond links Cys-278 and Cys-281. Residue Arg-293 coordinates substrate. Disulfide bonds link Cys-329–Cys-352, Cys-334–Cys-435, and Cys-373–Cys-381. Residue His-369 coordinates Mn(2+).

This sequence belongs to the glycosyltransferase 16 (GT16) protein family. Homodimer. Requires Mn(2+) as cofactor. In terms of tissue distribution, detected in liver (at protein level). Detected in liver, brain, thymus and spleen.

It localises to the golgi apparatus membrane. It catalyses the reaction an N(4)-{beta-D-GlcNAc-(1-&gt;2)-alpha-D-Man-(1-&gt;3)-[alpha-D-Man-(1-&gt;6)]-beta-D-Man-(1-&gt;4)-beta-D-GlcNAc-(1-&gt;4)-beta-D-GlcNAc}-L-asparaginyl-[protein] + UDP-N-acetyl-alpha-D-glucosamine = N(4)-{beta-D-GlcNAc-(1-&gt;2)-alpha-D-Man-(1-&gt;3)-[beta-D-GlcNAc-(1-&gt;2)-alpha-D-Man-(1-&gt;6)]-beta-D-Man-(1-&gt;4)-beta-D-GlcNAc-(1-&gt;4)-beta-D-GlcNAc}-L-asparaginyl-[protein] + UDP + H(+). Its pathway is protein modification; protein glycosylation. Plays an essential role in protein N-glycosylation. Catalyzes the transfer of N-acetylglucosamine (GlcNAc) onto the free terminal mannose moiety in the core structure of the nascent N-linked glycan chain, giving rise to the second branch in complex glycans. The chain is Alpha-1,6-mannosyl-glycoprotein 2-beta-N-acetylglucosaminyltransferase (Mgat2) from Rattus norvegicus (Rat).